The primary structure comprises 917 residues: Phosphoenolpyruvate carboxylase (917 aa).

Residues His145 and Lys578 contribute to the active site.

It belongs to the PEPCase type 1 family. Requires Mg(2+) as cofactor.

The enzyme catalyses oxaloacetate + phosphate = phosphoenolpyruvate + hydrogencarbonate. Functionally, forms oxaloacetate, a four-carbon dicarboxylic acid source for the tricarboxylic acid cycle. The chain is Phosphoenolpyruvate carboxylase from Azoarcus sp. (strain BH72).